The following is a 919-amino-acid chain: Calcium-activated chloride channel regulator 4 (919 aa).

The first 21 residues, 1-21, serve as a signal peptide directing secretion; the sequence is MGLFRGFVFLLVLCLLHQSNT. The segment at 45–199 is metalloprotease domain; sequence DEKIIEQIED…GISGRNRVYK (155 aa). N-linked (GlcNAc...) asparagine glycosylation is present at Asn75. His155 lines the Zn(2+) pocket. The active site involves Glu156. His159 and Asp166 together coordinate Zn(2+). Positions 306–476 constitute a VWFA domain; it reads IVCLVLDKSG…NGLIDAFGAL (171 aa). N-linked (GlcNAc...) asparagine glycosylation is found at Asn340, Asn504, Asn542, Asn588, Asn628, Asn811, Asn832, Asn837, and Asn852. The segment at 870-893 is disordered; sequence ANPDDIDPTPTPTPTPTPDKSHNS. The chain crosses the membrane as a helical span at residues 895-915; sequence VNISTLVLSVIGSVVIVNFIL.

The protein belongs to the CLCR family. The translation product is autoproteolytically cleaved by the metalloprotease domain in the endoplasmic reticulum into a N-terminal and a C-terminal products that remain physically associated with each other. The cleavage is necessary for calcium-activated chloride channel (CaCC) activation activity. In terms of tissue distribution, primarily expressed in the digestive tract, mainly in colon. Detected in smaller amounts in brain, urogenital organs, testis, and salivary and mammary glands. Highly expressed in the epithelial layer and submucosal gland of the inferior turbinate mucosa. Lower levels in the epithelial layer of nasal polyp.

It is found in the cell membrane. Its subcellular location is the apical cell membrane. The protein resides in the secreted. May be involved in mediating calcium-activated chloride conductance. In Homo sapiens (Human), this protein is Calcium-activated chloride channel regulator 4 (CLCA4).